Consider the following 183-residue polypeptide: Dual-action ribosomal maturation protein DarP (183 aa).

Belongs to the DarP family.

It localises to the cytoplasm. Its function is as follows. Member of a network of 50S ribosomal subunit biogenesis factors which assembles along the 30S-50S interface, preventing incorrect 23S rRNA structures from forming. Promotes peptidyl transferase center (PTC) maturation. The protein is Dual-action ribosomal maturation protein DarP of Klebsiella pneumoniae (strain 342).